The following is a 427-amino-acid chain: Serine protease HTRA2, mitochondrial (427 aa).

Residues His-33–Asn-55 form a disordered region. The chain crosses the membrane as a helical span at residues Ser-66–Glu-86. Positions Ala-78–Ser-81 match the IAP-binding motif. The interval Ser-144–Leu-307 is serine protease. Active-site charge relay system residues include His-162, Asp-194, and Ser-271. The 86-residue stretch at Met-330–Val-415 folds into the PDZ domain.

Belongs to the peptidase S1C family. Interacts with th/DIAP1 (via BIR 2 domain).

The protein resides in the mitochondrion intermembrane space. It localises to the mitochondrion membrane. It catalyses the reaction Cleavage of non-polar aliphatic amino-acids at the P1 position, with a preference for Val, Ile and Met. At the P2 and P3 positions, Arg is selected most strongly with a secondary preference for other hydrophilic residues.. Serine protease that shows proteolytic activity against a non-specific substrate beta-casein. Promotes or induces cell death either by direct binding to and inhibition of BIRC proteins (also called inhibitor of apoptosis proteins, IAPs), leading to an increase in caspase activity, or by a BIRC inhibition-independent, caspase-independent and serine protease activity-dependent mechanism. Can antagonize antiapoptotic activity of th/Diap1 by directly inducing the degradation of th/Diap1. The polypeptide is Serine protease HTRA2, mitochondrial (Drosophila pseudoobscura pseudoobscura (Fruit fly)).